A 157-amino-acid polypeptide reads, in one-letter code: uncharacterized protein (157 aa).

This is an uncharacterized protein from Bacillus subtilis (strain 168).